The chain runs to 100 residues: Large ribosomal subunit protein bL21 (100 aa).

It belongs to the bacterial ribosomal protein bL21 family. In terms of assembly, part of the 50S ribosomal subunit. Contacts protein L20.

Functionally, this protein binds to 23S rRNA in the presence of protein L20. This Mycoplasmoides gallisepticum (strain R(low / passage 15 / clone 2)) (Mycoplasma gallisepticum) protein is Large ribosomal subunit protein bL21.